The primary structure comprises 480 residues: Vacuolar protein sorting-associated protein 9A (480 aa).

In terms of domain architecture, VPS9 spans 111–255 (VKSDEELFEK…IWNIDGESLS (145 aa)). GTP-binding residues include N189 and D194. A compositionally biased stretch (polar residues) spans 276–288 (SASSENQDNQNNL). Disordered stretches follow at residues 276–338 (SASS…VQSI) and 418–480 (ESEE…PEHA). Over residues 289-305 (DVREQKSQTLKASRDSD) the composition is skewed to basic and acidic residues. Polar residues-rich tracts occupy residues 327-338 (ASSNPVERVQSI), 427-437 (NAVNFSEGSSK), and 451-461 (VDNTGTQQTAV).

In terms of assembly, interacts with RAB5A. Interacts with GPA3 (via C-terminus).

It localises to the cytoplasm. The protein resides in the golgi apparatus. It is found in the trans-Golgi network. Its subcellular location is the prevacuolar compartment. Functionally, functions as a guanine nucleotide exchange factor (GEF) for Rab small GTPases. Activates specifically RAB5A protein. Functions cooperatively with RAB5A to regulate post-Golgi dense vesicle-mediated transport of storage proteins to the type II protein bodies (PBII) protein storage vacuoles in developing endosperm. The polypeptide is Vacuolar protein sorting-associated protein 9A (Oryza sativa subsp. japonica (Rice)).